A 1055-amino-acid chain; its full sequence is Auxin response factor 16 (1055 aa).

A DNA-binding region (TF-B3) is located at residues 127–229 (FCKTLTASDT…QLLLGIRRAT (103 aa)). Disordered regions lie at residues 485–510 (PVMSQHQQQPHQLSQQQQVQPSQQSS), 532–565 (QEHLQRQQSQPAQQLKAASSLHSVEQHKLKEQTS), 585–609 (SQLQQLGLPKSPTHRQGLTGLPIAG), 701–720 (SDSIGQLKQSPSQQAPLNHM), and 732–769 (SHSALAESGDPSSSTAPSTSRISPINSLSRANQGSRNL). 2 stretches are compositionally biased toward low complexity: residues 488–510 (SQHQQQPHQLSQQQQVQPSQQSS) and 532–552 (QEHLQRQQSQPAQQLKAASSL). The span at 742 to 756 (PSSSTAPSTSRISPI) shows a compositional bias: low complexity. A compositionally biased stretch (polar residues) spans 757 to 769 (NSLSRANQGSRNL). Residues 940–1024 (RTFTKVQKRG…KSIKILSAAE (85 aa)) form the PB1 domain. The segment at 1034 to 1055 (LGGVPPQTQACSASDDANAWRG) is disordered.

It belongs to the ARF family. In terms of assembly, homodimers and heterodimers. In terms of tissue distribution, expressed in roots, culms, leaves and young panicles.

The protein resides in the nucleus. Its function is as follows. Auxin response factors (ARFs) are transcriptional factors that bind specifically to the DNA sequence 5'-TGTCTC-3' found in the auxin-responsive promoter elements (AuxREs). This is Auxin response factor 16 (ARF16) from Oryza sativa subsp. japonica (Rice).